The sequence spans 68 residues: Conotoxin ba14a (68 aa).

Residues 1–20 form the signal peptide; sequence MKLSVMFIVALVLSLSMTDG. A propeptide spanning residues 21–50 is cleaved from the precursor; sequence LPRRAENGGRIFRQHSPDSMDPQTRQIKTR.

In terms of processing, contains 2 disulfide bonds. Expressed by the venom duct.

It localises to the secreted. The sequence is that of Conotoxin ba14a from Conus bayani (Bayan's cone).